Here is a 556-residue protein sequence, read N- to C-terminus: Phenylalanine--tRNA ligase beta subunit (556 aa).

Residues 278–354 (LTPKEFEVSF…IAYGYNNIDP (77 aa)) form the B5 domain. Positions 332, 338, 341, and 342 each coordinate Mg(2+).

The protein belongs to the phenylalanyl-tRNA synthetase beta subunit family. Type 2 subfamily. As to quaternary structure, tetramer of two alpha and two beta subunits. The cofactor is Mg(2+).

The protein resides in the cytoplasm. The enzyme catalyses tRNA(Phe) + L-phenylalanine + ATP = L-phenylalanyl-tRNA(Phe) + AMP + diphosphate + H(+). This is Phenylalanine--tRNA ligase beta subunit from Pyrococcus furiosus (strain ATCC 43587 / DSM 3638 / JCM 8422 / Vc1).